A 301-amino-acid chain; its full sequence is ATP synthase gamma chain (301 aa).

The protein belongs to the ATPase gamma chain family. As to quaternary structure, F-type ATPases have 2 components, CF(1) - the catalytic core - and CF(0) - the membrane proton channel. CF(1) has five subunits: alpha(3), beta(3), gamma(1), delta(1), epsilon(1). CF(0) has three main subunits: a, b and c.

The protein resides in the cell inner membrane. Functionally, produces ATP from ADP in the presence of a proton gradient across the membrane. The gamma chain is believed to be important in regulating ATPase activity and the flow of protons through the CF(0) complex. The sequence is that of ATP synthase gamma chain from Helicobacter pylori (strain J99 / ATCC 700824) (Campylobacter pylori J99).